Reading from the N-terminus, the 110-residue chain is Translation initiation factor 1A 3 (110 aa).

The disordered stretch occupies residues 1-29 (MIRKRQSGSNKSVSSGNNQEVTRVRTPRK). Residues 7–18 (SGSNKSVSSGNN) show a composition bias toward low complexity. One can recognise an S1-like domain in the interval 22–96 (TRVRTPRKDR…SKADVIWKYT (75 aa)).

It belongs to the eIF-1A family.

Functionally, seems to be required for maximal rate of protein biosynthesis. Enhances ribosome dissociation into subunits and stabilizes the binding of the initiator Met-tRNA(I) to 40 S ribosomal subunits. This chain is Translation initiation factor 1A 3 (eIF1A3), found in Methanosarcina acetivorans (strain ATCC 35395 / DSM 2834 / JCM 12185 / C2A).